We begin with the raw amino-acid sequence, 336 residues long: Phospho-N-acetylmuramoyl-pentapeptide-transferase (336 aa).

Helical transmembrane passes span leucine 3 to isoleucine 23, glycine 53 to isoleucine 73, serine 78 to leucine 98, leucine 118 to isoleucine 138, valine 143 to valine 163, glycine 174 to alanine 194, phenylalanine 200 to asparagine 220, valine 226 to alanine 246, tryptophan 251 to valine 271, and alanine 316 to phenylalanine 336.

Belongs to the glycosyltransferase 4 family. MraY subfamily. Requires Mg(2+) as cofactor.

The protein localises to the cell membrane. The catalysed reaction is UDP-N-acetyl-alpha-D-muramoyl-L-alanyl-gamma-D-glutamyl-L-lysyl-D-alanyl-D-alanine + di-trans,octa-cis-undecaprenyl phosphate = Mur2Ac(oyl-L-Ala-gamma-D-Glu-L-Lys-D-Ala-D-Ala)-di-trans,octa-cis-undecaprenyl diphosphate + UMP. The protein operates within cell wall biogenesis; peptidoglycan biosynthesis. In terms of biological role, catalyzes the initial step of the lipid cycle reactions in the biosynthesis of the cell wall peptidoglycan: transfers peptidoglycan precursor phospho-MurNAc-pentapeptide from UDP-MurNAc-pentapeptide onto the lipid carrier undecaprenyl phosphate, yielding undecaprenyl-pyrophosphoryl-MurNAc-pentapeptide, known as lipid I. The protein is Phospho-N-acetylmuramoyl-pentapeptide-transferase of Streptococcus pyogenes serotype M49 (strain NZ131).